We begin with the raw amino-acid sequence, 123 residues long: MPTINQLIRKGREKQLKRKKTPALQACPQRRGVCTRVYTTTPKKPNSALRKVARVRLTNAIEVTAYIGGEGHNLQEHSVVLIRGGRVKDLPGVRYHIVRGSLDTAGVADRRQGRSKYGAKRPK.

Asp-89 carries the 3-methylthioaspartic acid modification.

It belongs to the universal ribosomal protein uS12 family. Part of the 30S ribosomal subunit. Contacts proteins S8 and S17. May interact with IF1 in the 30S initiation complex.

Functionally, with S4 and S5 plays an important role in translational accuracy. Its function is as follows. Interacts with and stabilizes bases of the 16S rRNA that are involved in tRNA selection in the A site and with the mRNA backbone. Located at the interface of the 30S and 50S subunits, it traverses the body of the 30S subunit contacting proteins on the other side and probably holding the rRNA structure together. The combined cluster of proteins S8, S12 and S17 appears to hold together the shoulder and platform of the 30S subunit. This Maridesulfovibrio salexigens (strain ATCC 14822 / DSM 2638 / NCIMB 8403 / VKM B-1763) (Desulfovibrio salexigens) protein is Small ribosomal subunit protein uS12.